The chain runs to 477 residues: MYSLLIALLCAGTAVDAQALQQRQAGTTLTVDLSTTYQRIDGFGTSEAFQRAVQMSRLPEEGQRRALDVLFSTTNGAGLSILRNGIGSSPDMSSDHMVSIAPKSPGSPNNPLIYSWDGSDNKQLWVSQEAVHTYGVKTIYADAWSAPGYMKTNGNDANGGTLCGLSGAQCASGDWRQAYADYLTKYVEFYQESNVTVTHLGFINEPELTTSYASMRFSASQAAEFIRILYPTIQKSNLTYKPTIACCDAEGWNSQAGMLGALSSVNSMFGLVTAHAYTSQPGFSMNTPHPVWMTEAADLQGAWTSAWYSYGGAGEGWTWANNVYNAIVNGNASAYLYWIGAQTGNTNSHMVHIDANAGTVEPSKRLWALGQWSRFVRPGARRVAVSGASGSLRTAAFRNEDGSVAVVVINSGGDAAVNVRLASSSSADQQPASAKAWATDNSRAIEEIQASFADGVATVNVPSRSMTTVVLYPAADA.

The N-terminal stretch at 1 to 19 (MYSLLIALLCAGTAVDAQA) is a signal peptide. N-linked (GlcNAc...) asparagine glycosylation is found at Asn194, Asn237, and Asn331.

It belongs to the glycosyl hydrolase 30 family.

It localises to the secreted. Its activity is regulated as follows. Activity is enhanced by 10 mM Co(2+), Cu 2(2+) and Mn(2+) to levels as high as 44%. Partial inhibition of activity from 5 to 15% is observed in the presence of the following compouinds at a centration of 10 mM (from higher inhibition to lower): EDTA &gt; Mg(2+) &gt; urea, Zn(2+) &gt; Fe(3+). In terms of biological role, xylanase exhibiting endo- and exo-xylanase activity. Shows the highest activity toward beechwood glucuronoxylan, which consists of a beta-1,4-linked xylose backbone decorated with the methylated form of D-glucuronic acid (MeGlcA) attached directly to the main chain at xylose C2. Also acts against wheat arabinoxylan, a xylan without MeGlcA substituents along the main chain, but the xylanase activity is about two orders of magnitude lower than that achieved in the case of beechwood xylan. Shows no activity against carob galactomannan, konjac glucomannan, or barley beta-glucan. The recombinant xylanase also exhibits an exo-activity by releasing processively disaccharide units from the non-reducing end of linear and decorated xylooligosaccharides (XOS). The sequence is that of GH30 family xylanase from Thermothelomyces thermophilus (strain ATCC 42464 / BCRC 31852 / DSM 1799) (Sporotrichum thermophile).